The following is a 335-amino-acid chain: Eukaryotic translation initiation factor 3 subunit I (335 aa).

5 WD repeats span residues 8 to 47 (GHERALTQIRYNKDGDIIFSTAKDQHICAWYAHNGERLGT), 50 to 91 (GHQG…KTWD), 145 to 184 (CAESKATVAGWSYMSKYIIAGHEDGSVSQYDSKTGELLFN), 189 to 228 (EPDLQVTDLQWSPDRTYFITASKDKTAKLVNARDLEVMKT), and 286 to 325 (GHFGPLNTVAVDPNGKGYASGGEDGYVRVHQFDKGYFDFT).

It belongs to the eIF-3 subunit I family. Component of the eukaryotic translation initiation factor 3 (eIF-3) complex.

It localises to the cytoplasm. Component of the eukaryotic translation initiation factor 3 (eIF-3) complex, which is involved in protein synthesis of a specialized repertoire of mRNAs and, together with other initiation factors, stimulates binding of mRNA and methionyl-tRNAi to the 40S ribosome. The eIF-3 complex specifically targets and initiates translation of a subset of mRNAs involved in cell proliferation. This Sclerotinia sclerotiorum (strain ATCC 18683 / 1980 / Ss-1) (White mold) protein is Eukaryotic translation initiation factor 3 subunit I (tif34).